The sequence spans 296 residues: Cytidine deaminase (296 aa).

CMP/dCMP-type deaminase domains follow at residues 47-167 (TEAE…FGPK) and 186-296 (DSSD…VDPV). 88–90 (NLE) provides a ligand contact to substrate. Residue His-101 participates in Zn(2+) binding. Residue Glu-103 is the Proton donor of the active site. Residues Cys-128 and Cys-131 each contribute to the Zn(2+) site.

Belongs to the cytidine and deoxycytidylate deaminase family. As to quaternary structure, homodimer. The cofactor is Zn(2+).

It catalyses the reaction cytidine + H2O + H(+) = uridine + NH4(+). It carries out the reaction 2'-deoxycytidine + H2O + H(+) = 2'-deoxyuridine + NH4(+). This enzyme scavenges exogenous and endogenous cytidine and 2'-deoxycytidine for UMP synthesis. The protein is Cytidine deaminase of Shewanella sp. (strain MR-4).